The sequence spans 249 residues: Nicotinamide/nicotinic acid mononucleotide adenylyltransferase (249 aa).

NAD(+) contacts are provided by serine 34 and phenylalanine 35. 2 residues coordinate ATP: histidine 42 and lysine 75. Threonine 112, glycine 141, aspartate 143, tryptophan 154, arginine 173, and asparagine 204 together coordinate NAD(+). 209–210 (SR) provides a ligand contact to ATP.

The protein belongs to the eukaryotic NMN adenylyltransferase family. It depends on a divalent metal cation as a cofactor.

It catalyses the reaction beta-nicotinamide D-ribonucleotide + ATP + H(+) = diphosphate + NAD(+). The catalysed reaction is nicotinate beta-D-ribonucleotide + ATP + H(+) = deamido-NAD(+) + diphosphate. It functions in the pathway cofactor biosynthesis; NAD(+) biosynthesis; deamido-NAD(+) from nicotinate D-ribonucleotide: step 1/1. Its pathway is cofactor biosynthesis; NAD(+) biosynthesis; NAD(+) from nicotinamide D-ribonucleotide: step 1/1. Catalyzes the formation of NAD(+) from nicotinamide mononucleotide (NMN) and ATP. Can also use the deamidated form; nicotinic acid mononucleotide (NaMN) as substrate. This is Nicotinamide/nicotinic acid mononucleotide adenylyltransferase from Oryza sativa subsp. japonica (Rice).